The following is a 138-amino-acid chain: Small ribosomal subunit protein uS8c (138 aa).

Belongs to the universal ribosomal protein uS8 family. As to quaternary structure, part of the 30S ribosomal subunit.

It localises to the plastid. It is found in the chloroplast. Its function is as follows. One of the primary rRNA binding proteins, it binds directly to 16S rRNA central domain where it helps coordinate assembly of the platform of the 30S subunit. In Chlorella vulgaris (Green alga), this protein is Small ribosomal subunit protein uS8c (rps8).